Consider the following 455-residue polypeptide: MTOR-associated protein MEAK7 (455 aa).

A lipid anchor (N-myristoyl glycine) is attached at G2. Residues 242-410 enclose the TLDc domain; it reads SILDVLSVIY…FDKMEVWGLG (169 aa). Residues 435–455 form a disordered region; the sequence is LEISGRARHSEGLREVPRDED. Residues 442-455 are compositionally biased toward basic and acidic residues; that stretch reads RHSEGLREVPRDED.

In terms of assembly, interacts (via C-terminal domain) with MTOR and MLST8; the interaction with MTOR increases upon nutrient stimulation.

Its subcellular location is the membrane. It is found in the cytoplasm. The protein localises to the lysosome. Functionally, activates an alternative mTOR signaling through RPS6KB2 activation and EIF4EBP1 repression to regulate cell proliferation and migration. Recruits MTOR at the lysosome, essential for MTOR signaling at the lysosome. This is MTOR-associated protein MEAK7 (Meak7) from Mus musculus (Mouse).